Reading from the N-terminus, the 737-residue chain is Palmitoyltransferase akr1 (737 aa).

Residues 1–15 (MSSGNSSTGTHTNGN) are compositionally biased toward low complexity. Positions 1-39 (MSSGNSSTGTHTNGNFATLGSSPPSAVGGKGRAIPPKVT) are disordered. Over 1–313 (MSSGNSSTGT…WVRNKSLMSK (313 aa)) the chain is Cytoplasmic. ANK repeat units lie at residues 96-125 (EGITPLHWAAINNQYAMCKFLLDSGADVNA), 130-159 (SVATPAMWAAQRCHYYIVHLLLQRGADPLL), 163-192 (QGYNILHLATIDGNAFLLVLLLHQEIPVDV), 196-225 (QGHTGLMWAAYKGYPALVDLFLRWGAHANA), and 228-258 (EGGLTPLHWALVKGSLPCVLKLIEYGADKFA). The next 2 helical transmembrane spans lie at 314–334 (FFFLWPFAIVFAAVWILSNMV) and 335–355 (VYAAIPMMLVTVFGLQWVAQK). Topologically, residues 356–374 (AASQGPSEYRILQKTPYLS) are cytoplasmic. The chain crosses the membrane as a helical span at residues 375-395 (GVFAGSLFWVGFRYVFYVLPV). Over 396-401 (TYSTSP) the chain is Lumenal. Residues 402-422 (ILNGLFAIFFSLTTYFYIYSM) traverse the membrane as a helical segment. The Cytoplasmic segment spans residues 423–498 (VEDPGFVPKL…DNCVGANNLR (76 aa)). The DHHC domain occupies 455 to 505 (NFCVSCMVRRPLRSKHCKRCARCVAKHDHHCPWIDNCVGANNLRHFVLYIT). Cys485 functions as the S-palmitoyl cysteine intermediate in the catalytic mechanism. Residues 499 to 519 (HFVLYITCLEVGIVLFVQLTF) traverse the membrane as a helical segment. The Lumenal portion of the chain corresponds to 520 to 548 (NYINSLPAPAQPQCNIINETLCDFVLRDT). The helical transmembrane segment at 549–569 (FTLVLDLWVCIQLVWITMLVA) threads the bilayer. Residues 570 to 737 (VQMIQISRNQ…LSVEDPEQGV (168 aa)) are Cytoplasmic-facing.

The protein belongs to the DHHC palmitoyltransferase family. AKR/ZDHHC17 subfamily.

The protein localises to the early endosome membrane. It is found in the golgi apparatus membrane. The catalysed reaction is L-cysteinyl-[protein] + hexadecanoyl-CoA = S-hexadecanoyl-L-cysteinyl-[protein] + CoA. Its function is as follows. Palmitoyltransferase specific for casein kinase 1. The chain is Palmitoyltransferase akr1 (akr1) from Aspergillus oryzae (strain ATCC 42149 / RIB 40) (Yellow koji mold).